The following is a 224-amino-acid chain: 7-cyano-7-deazaguanine synthase (224 aa).

Residue L10–V20 coordinates ATP. Zn(2+) contacts are provided by C189, C199, C202, and C205.

It belongs to the QueC family. Zn(2+) is required as a cofactor.

It carries out the reaction 7-carboxy-7-deazaguanine + NH4(+) + ATP = 7-cyano-7-deazaguanine + ADP + phosphate + H2O + H(+). It participates in purine metabolism; 7-cyano-7-deazaguanine biosynthesis. Functionally, catalyzes the ATP-dependent conversion of 7-carboxy-7-deazaguanine (CDG) to 7-cyano-7-deazaguanine (preQ(0)). This chain is 7-cyano-7-deazaguanine synthase, found in Pseudomonas fluorescens (strain SBW25).